We begin with the raw amino-acid sequence, 190 residues long: Large ribosomal subunit protein uL6 (190 aa).

The protein belongs to the universal ribosomal protein uL6 family.

This Spodoptera frugiperda (Fall armyworm) protein is Large ribosomal subunit protein uL6 (RpL9).